The sequence spans 501 residues: ATP synthase subunit alpha (501 aa).

Residue Gly-169–Thr-176 coordinates ATP.

This sequence belongs to the ATPase alpha/beta chains family. In terms of assembly, F-type ATPases have 2 components, CF(1) - the catalytic core - and CF(0) - the membrane proton channel. CF(1) has five subunits: alpha(3), beta(3), gamma(1), delta(1), epsilon(1). CF(0) has three main subunits: a(1), b(2) and c(9-12). The alpha and beta chains form an alternating ring which encloses part of the gamma chain. CF(1) is attached to CF(0) by a central stalk formed by the gamma and epsilon chains, while a peripheral stalk is formed by the delta and b chains.

The protein resides in the cell membrane. It carries out the reaction ATP + H2O + 4 H(+)(in) = ADP + phosphate + 5 H(+)(out). In terms of biological role, produces ATP from ADP in the presence of a proton gradient across the membrane. The alpha chain is a regulatory subunit. This Streptococcus pneumoniae serotype 2 (strain D39 / NCTC 7466) protein is ATP synthase subunit alpha.